Consider the following 784-residue polypeptide: LPS-assembly protein LptD (784 aa).

A signal peptide spans 1–24 (MKKRIPTLLATMIATALYSQQGLA). Disulfide bonds link C31/C724 and C173/C725.

It belongs to the LptD family. As to quaternary structure, component of the lipopolysaccharide transport and assembly complex. Interacts with LptE and LptA. In terms of processing, contains two intramolecular disulfide bonds.

It is found in the cell outer membrane. In terms of biological role, together with LptE, is involved in the assembly of lipopolysaccharide (LPS) at the surface of the outer membrane. This chain is LPS-assembly protein LptD, found in Shigella flexneri serotype 5b (strain 8401).